Reading from the N-terminus, the 460-residue chain is MLTVGCTLLVALLAAPAVALVLGSCRALEVANGTVTSLPGATVTLICPGKEAAGNVTIHWVYSGSQNREWTTTGNTLVLRDVQLSDTGDYLCSLNDHLVGTVPLLVDVPPEEPKLSCFRKNPLVNAICEWRPSSTPSPTTKAVLFAKKINTTNGKSDFQVPCQYSQQLKSFSCQVEILEGDKVYHIVSLCVANSVGSKSSHNEAFHSLKMVQPDPPANLVVSAIPGRPRWLKVSWQHPETWDPSYYLLQFQLRYRPVWSKEFTVLLLPVAQYQCVIHDALRGVKHVVQVRGKEELDLGQWSEWSPEVTGTPWIAEPRTTPAGILWNPTQVSVEDSANHEDQYESSTEATSVLAPVQESSSMSLPTFLVAGGSLAFGLLLCVFIILRLKQKWKSEAEKESKTTSPPPPPYSLGPLKPTFLLVPLLTPHSSGSDNTVNHSCLGVRDAQSPYDNSNRDYLFPR.

Positions 1-19 (MLTVGCTLLVALLAAPAVA) are cleaved as a signal peptide. The region spanning 20–116 (LVLGSCRALE…DVPPEEPKLS (97 aa)) is the Ig-like C2-type domain. Residues 20–364 (LVLGSCRALE…VQESSSMSLP (345 aa)) are Extracellular-facing. Disulfide bonds link cysteine 25-cysteine 190, cysteine 47-cysteine 92, cysteine 117-cysteine 128, and cysteine 162-cysteine 173. Residues asparagine 32 and asparagine 55 are each glycosylated (N-linked (GlcNAc...) asparagine). Fibronectin type-III domains follow at residues 109–214 (PPEE…VQPD) and 215–313 (PPAN…TPWI). N-linked (GlcNAc...) asparagine glycosylation occurs at asparagine 150. An N-linked (GlcNAc...) asparagine glycan is attached at asparagine 218. Residues 300–304 (WSEWS) carry the WSXWS motif motif. A helical membrane pass occupies residues 365-385 (TFLVAGGSLAFGLLLCVFIIL). Residues 386-460 (RLKQKWKSEA…NSNRDYLFPR (75 aa)) are Cytoplasmic-facing.

The protein belongs to the type I cytokine receptor family. Type 3 subfamily. As to quaternary structure, component of a hexamer of two molecules each of IL6, IL6R and IL6ST; first binds to IL6 to associate with the signaling subunit IL6ST. Interacts (via N-terminal ectodomain) with SORL1; this interaction may affect IL6-binding to IL6R, hence decrease IL6 'classic-signaling'. In terms of assembly, also interacts with SORL1; this interaction leads to soluble IL6R internalization. May form a trimeric complex with the soluble SORL1 ectodomain and circulating IL6 receptor; this interaction might stabilize circulating IL6, hence promote IL6 'trans-signaling'. A short soluble form is also released from the membrane by proteolysis. The sIL6R is formed by limited proteolysis of membrane-bound receptors, a process referred to as ectodomain shedding. mIL6R is cleaved by the proteases ADAM10 and ADAM17. In terms of processing, glycosylated. Glycosylation is dispensable for transport, signaling, and cell-surface turnover. Glycosylation at Asn-55 is a protease-regulatory exosite. Glycosylation is required for ADAM17-mediated proteolysis. As to expression, expressed by dendritic cells. In terms of tissue distribution, detected in the cerebrospinal fluid.

Its subcellular location is the cell membrane. The protein localises to the secreted. With respect to regulation, classic and trans-signaling are both inhibited by tocilizumab, a humanized monoclonal antibody that blocks interleukin IL6R signaling. Part of the receptor for interleukin 6. Binds to IL6 with low affinity, but does not transduce a signal. Signal activation necessitate an association with IL6ST. Activation leads to the regulation of the immune response, acute-phase reactions and hematopoiesis. The interaction with membrane-bound IL6R and IL6ST stimulates 'classic signaling', the restricted expression of the IL6R limits classic IL6 signaling to only a few tissues such as the liver and some cells of the immune system. Whereas the binding of IL6 and soluble IL6R to IL6ST stimulates 'trans-signaling'. Alternatively, 'cluster signaling' occurs when membrane-bound IL6:IL6R complexes on transmitter cells activate IL6ST receptors on neighboring receiver cells. In terms of biological role, signaling via the membrane-bound IL6R is mostly regenerative and anti-inflammatory. Drives naive CD4(+) T cells to the Th17 lineage, through 'cluster signaling' by dendritic cells. Its function is as follows. Soluble form of IL6 receptor (sIL6R) that acts as an agonist of IL6 activity. The IL6:sIL6R complex (hyper-IL6) binds to IL6ST/gp130 on cell surfaces and induces signaling also on cells that do not express membrane-bound IL6R in a process called IL6 'trans-signaling'. sIL6R is causative for the pro-inflammatory properties of IL6 and an important player in the development of chronic inflammatory diseases. In complex with IL6, is required for induction of VEGF production. Plays a protective role during liver injury, being required for maintenance of tissue regeneration. 'Trans-signaling' in central nervous system regulates energy and glucose homeostasis. The chain is Interleukin-6 receptor subunit alpha from Mus musculus (Mouse).